Here is a 313-residue protein sequence, read N- to C-terminus: Probable alpha-L-glutamate ligase (313 aa).

Positions 112–294 (LQMLMAQGIA…IALQMIVHLE (183 aa)) constitute an ATP-grasp domain. Residues Lys-148, 185-186 (EF), Asp-194, and 218-220 (RAN) each bind ATP. Residues Asp-255, Glu-267, and Asn-269 each contribute to the Mg(2+) site. Mn(2+)-binding residues include Asp-255, Glu-267, and Asn-269.

The protein belongs to the RimK family. Mg(2+) serves as cofactor. The cofactor is Mn(2+).

This chain is Probable alpha-L-glutamate ligase, found in Pasteurella multocida (strain Pm70).